Consider the following 179-residue polypeptide: Ribosome maturation factor RimM (179 aa).

The PRC barrel domain occupies 96 to 179; the sequence is DNEFYWVDLI…KITVDWGLDY (84 aa).

The protein belongs to the RimM family. Binds ribosomal protein uS19.

Its subcellular location is the cytoplasm. An accessory protein needed during the final step in the assembly of 30S ribosomal subunit, possibly for assembly of the head region. Essential for efficient processing of 16S rRNA. May be needed both before and after RbfA during the maturation of 16S rRNA. It has affinity for free ribosomal 30S subunits but not for 70S ribosomes. The sequence is that of Ribosome maturation factor RimM from Janthinobacterium sp. (strain Marseille) (Minibacterium massiliensis).